Reading from the N-terminus, the 496-residue chain is Apolipoprotein N-acyltransferase (496 aa).

6 consecutive transmembrane segments (helical) span residues glycine 23–tryptophan 43, leucine 50–leucine 70, leucine 84–leucine 104, leucine 126–glutamine 146, tryptophan 171–isoleucine 191, and phenylalanine 205–isoleucine 225. The region spanning tryptophan 236–isoleucine 464 is the CN hydrolase domain. The active-site Proton acceptor is the glutamate 276. Lysine 325 is a catalytic residue. Residue cysteine 374 is the Nucleophile of the active site. Residues proline 476 to asparagine 496 form a helical membrane-spanning segment.

The protein belongs to the CN hydrolase family. Apolipoprotein N-acyltransferase subfamily.

The protein resides in the cell inner membrane. The enzyme catalyses N-terminal S-1,2-diacyl-sn-glyceryl-L-cysteinyl-[lipoprotein] + a glycerophospholipid = N-acyl-S-1,2-diacyl-sn-glyceryl-L-cysteinyl-[lipoprotein] + a 2-acyl-sn-glycero-3-phospholipid + H(+). The protein operates within protein modification; lipoprotein biosynthesis (N-acyl transfer). Functionally, catalyzes the phospholipid dependent N-acylation of the N-terminal cysteine of apolipoprotein, the last step in lipoprotein maturation. This Prochlorococcus marinus subsp. pastoris (strain CCMP1986 / NIES-2087 / MED4) protein is Apolipoprotein N-acyltransferase.